The sequence spans 577 residues: DNA primase (577 aa).

The CHC2-type zinc-finger motif lies at C40–C64. Positions V255–P337 constitute a Toprim domain. E261, D305, and D307 together coordinate Mg(2+).

It belongs to the DnaG primase family. As to quaternary structure, monomer. Interacts with DnaB. Zn(2+) is required as a cofactor. Mg(2+) serves as cofactor.

The enzyme catalyses ssDNA + n NTP = ssDNA/pppN(pN)n-1 hybrid + (n-1) diphosphate.. RNA polymerase that catalyzes the synthesis of short RNA molecules used as primers for DNA polymerase during DNA replication. The sequence is that of DNA primase from Buchnera aphidicola subsp. Acyrthosiphon pisum (strain APS) (Acyrthosiphon pisum symbiotic bacterium).